Reading from the N-terminus, the 212-residue chain is Ion-translocating oxidoreductase complex subunit G (212 aa).

A helical membrane pass occupies residues 9–29 (GFLLALFALICTGLVAAVNQQ). Threonine 176 carries the post-translational modification FMN phosphoryl threonine.

This sequence belongs to the RnfG family. In terms of assembly, the complex is composed of six subunits: RnfA, RnfB, RnfC, RnfD, RnfE and RnfG. FMN is required as a cofactor.

It is found in the cell inner membrane. In terms of biological role, part of a membrane-bound complex that couples electron transfer with translocation of ions across the membrane. The protein is Ion-translocating oxidoreductase complex subunit G of Shewanella baltica (strain OS223).